The primary structure comprises 198 residues: Nucleoside triphosphate pyrophosphatase (198 aa).

Catalysis depends on Asp75, which acts as the Proton acceptor.

This sequence belongs to the Maf family. A divalent metal cation serves as cofactor.

Its subcellular location is the cytoplasm. The catalysed reaction is a ribonucleoside 5'-triphosphate + H2O = a ribonucleoside 5'-phosphate + diphosphate + H(+). It carries out the reaction a 2'-deoxyribonucleoside 5'-triphosphate + H2O = a 2'-deoxyribonucleoside 5'-phosphate + diphosphate + H(+). Functionally, nucleoside triphosphate pyrophosphatase. May have a dual role in cell division arrest and in preventing the incorporation of modified nucleotides into cellular nucleic acids. The polypeptide is Nucleoside triphosphate pyrophosphatase (Hyphomonas neptunium (strain ATCC 15444)).